Reading from the N-terminus, the 202-residue chain is Small ribosomal subunit protein uS4c (202 aa).

Residues 13 to 37 form a disordered region; that stretch reads RRPGVSPGLTSKTLKSKSNYIDRST. A compositionally biased stretch (polar residues) spans 20–37; it reads GLTSKTLKSKSNYIDRST. Positions 90 to 153 constitute an S4 RNA-binding domain; the sequence is MRLDNTIFRL…ESRSMISKNI (64 aa).

This sequence belongs to the universal ribosomal protein uS4 family. Part of the 30S ribosomal subunit. Contacts protein S5. The interaction surface between S4 and S5 is involved in control of translational fidelity.

It localises to the plastid. Its subcellular location is the chloroplast. One of the primary rRNA binding proteins, it binds directly to 16S rRNA where it nucleates assembly of the body of the 30S subunit. Functionally, with S5 and S12 plays an important role in translational accuracy. The sequence is that of Small ribosomal subunit protein uS4c (rps4) from Takakia lepidozioides (Moss).